The primary structure comprises 107 residues: U1-lycotoxin-Ls1q (107 aa).

Positions methionine 1–serine 20 are cleaved as a signal peptide. A propeptide spanning residues glutamate 21–arginine 41 is cleaved from the precursor. Intrachain disulfides connect cysteine 44–cysteine 59, cysteine 51–cysteine 68, cysteine 58–cysteine 86, and cysteine 70–cysteine 84.

It belongs to the neurotoxin 19 (CSTX) family. 04 (U1-Lctx) subfamily. As to expression, expressed by the venom gland.

The protein resides in the secreted. The polypeptide is U1-lycotoxin-Ls1q (Lycosa singoriensis (Wolf spider)).